Reading from the N-terminus, the 113-residue chain is U11-theraphotoxin-Hhn1a (113 aa).

A signal peptide spans 1–21; the sequence is MDTVRVAFLLVLVLAVSLGQA. Residues 22 to 74 constitute a propeptide that is removed on maturation; sequence DKDENRMEMQEKTEQGKSYLDFAENLLLQKLEELEAKLLEEDSEESRNSRQKR. Residues 60–69 show a composition bias toward basic and acidic residues; that stretch reads LEEDSEESRN. A disordered region spans residues 60–83; sequence LEEDSEESRNSRQKRCIGEGVPCD. 3 disulfide bridges follow: Cys-75/Cys-90, Cys-82/Cys-95, and Cys-89/Cys-110.

It belongs to the neurotoxin 14 (magi-1) family. 01 (HNTX-16) subfamily. Expressed by the venom gland.

It is found in the secreted. Probable ion channel inhibitor. This Cyriopagopus hainanus (Chinese bird spider) protein is U11-theraphotoxin-Hhn1a.